Reading from the N-terminus, the 120-residue chain is Fumarate reductase subunit D (120 aa).

Helical transmembrane passes span 25 to 45, 55 to 75, and 100 to 120; these read FAML…LGVI, VAGF…ISMP, and IACY…IFMI.

The protein belongs to the FrdD family. As to quaternary structure, part of an enzyme complex containing four subunits: a flavoprotein (FrdA), an iron-sulfur protein (FrdB), and two hydrophobic anchor proteins (FrdC and FrdD).

Its subcellular location is the cell inner membrane. In terms of biological role, anchors the catalytic components of the fumarate reductase complex to the cell membrane, binds quinones. This chain is Fumarate reductase subunit D, found in Aliivibrio fischeri (strain MJ11) (Vibrio fischeri).